The primary structure comprises 525 residues: Hydroxyneurosporene desaturase (525 aa).

It belongs to the carotenoid/retinoid oxidoreductase family.

The enzyme catalyses rhodopin + A = (3E)-3,4-didehydrorhodopin + AH2. Its pathway is carotenoid biosynthesis; spheroidene biosynthesis. Its function is as follows. Catalyzes the introduction of C-3,4 double bonds into 1-hydroxyneurosporene (1-HO-Neu) to yield demethylspheroidene (DMS). The preferred substrates are 1-hydroxy-neurosporene, 1-hydroxy-lycopene and 1,1-dihydroxyneurosporene, however the 3,4-didehydrolycopene derivatives such as 1,1-dihydroxy-3,4-didehydrolycopene, 1-methoxy-1-hydroxy-3,4-didehydrolycopene and 1-hydroxy-3,4-didehydrolycopene are also efficiently converted. 1-HO-carotene derivatives can be also used. The protein is Hydroxyneurosporene desaturase (crtD) of Rubrivivax gelatinosus (Rhodocyclus gelatinosus).